Here is a 31-residue protein sequence, read N- to C-terminus: Cytochrome b6-f complex subunit 6 (31 aa).

Residues 4–24 (VISYLSLLFISFLFALTLFIV) traverse the membrane as a helical segment.

The protein belongs to the PetL family. As to quaternary structure, the 4 large subunits of the cytochrome b6-f complex are cytochrome b6, subunit IV (17 kDa polypeptide, PetD), cytochrome f and the Rieske protein, while the 4 small subunits are PetG, PetL, PetM and PetN. The complex functions as a dimer.

The protein localises to the plastid. Its subcellular location is the chloroplast thylakoid membrane. In terms of biological role, component of the cytochrome b6-f complex, which mediates electron transfer between photosystem II (PSII) and photosystem I (PSI), cyclic electron flow around PSI, and state transitions. PetL is important for photoautotrophic growth as well as for electron transfer efficiency and stability of the cytochrome b6-f complex. This chain is Cytochrome b6-f complex subunit 6, found in Chara vulgaris (Common stonewort).